Reading from the N-terminus, the 493-residue chain is Glutamyl-tRNA(Gln) amidotransferase subunit A (493 aa).

Residues Lys-78 and Ser-158 each act as charge relay system in the active site. The active-site Acyl-ester intermediate is the Ser-182.

It belongs to the amidase family. GatA subfamily. In terms of assembly, heterotrimer of A, B and C subunits.

It carries out the reaction L-glutamyl-tRNA(Gln) + L-glutamine + ATP + H2O = L-glutaminyl-tRNA(Gln) + L-glutamate + ADP + phosphate + H(+). In terms of biological role, allows the formation of correctly charged Gln-tRNA(Gln) through the transamidation of misacylated Glu-tRNA(Gln) in organisms which lack glutaminyl-tRNA synthetase. The reaction takes place in the presence of glutamine and ATP through an activated gamma-phospho-Glu-tRNA(Gln). The sequence is that of Glutamyl-tRNA(Gln) amidotransferase subunit A from Rickettsia bellii (strain RML369-C).